Reading from the N-terminus, the 253-residue chain is 5-oxoprolinase subunit A (253 aa).

Belongs to the LamB/PxpA family. As to quaternary structure, forms a complex composed of PxpA, PxpB and PxpC.

The catalysed reaction is 5-oxo-L-proline + ATP + 2 H2O = L-glutamate + ADP + phosphate + H(+). Catalyzes the cleavage of 5-oxoproline to form L-glutamate coupled to the hydrolysis of ATP to ADP and inorganic phosphate. This Shouchella clausii (strain KSM-K16) (Alkalihalobacillus clausii) protein is 5-oxoprolinase subunit A.